The following is a 626-amino-acid chain: Putative Xaa-Pro dipeptidyl-peptidase (626 aa).

Catalysis depends on charge relay system residues serine 231, aspartate 348, and histidine 379.

It belongs to the peptidase S15 family.

The catalysed reaction is Hydrolyzes Xaa-Pro-|- bonds to release unblocked, N-terminal dipeptides from substrates including Ala-Pro-|-p-nitroanilide and (sequentially) Tyr-Pro-|-Phe-Pro-|-Gly-Pro-|-Ile.. This is Putative Xaa-Pro dipeptidyl-peptidase from Rhodopirellula baltica (strain DSM 10527 / NCIMB 13988 / SH1).